Here is a 514-residue protein sequence, read N- to C-terminus: Butyrophilin subfamily 2 member A2 (514 aa).

Positions 1–29 (MEPTTSLRSCPIASLLFFLVLSLFVLVSA) are cleaved as a signal peptide. The region spanning 30 to 142 (QFTVIGPAEP…SYDQATMKLM (113 aa)) is the Ig-like V-type domain. Over 30 to 244 (QFTVIGPAEP…ILIPESFVPS (215 aa)) the chain is Extracellular. Asn47 and Asn115 each carry an N-linked (GlcNAc...) asparagine glycan. 2 disulfides stabilise this stretch: Cys52–Cys126 and Cys166–Cys220. Residues 150–232 (PLIKMKTLED…NNTLLSQEVE (83 aa)) enclose the Ig-like C2-type domain. A helical membrane pass occupies residues 245–265 (LPLWMVAVAVTLPVVMLILLT). Over 266-514 (SGSICLVKKH…PISQSLVRKP (249 aa)) the chain is Cytoplasmic. Positions 281–304 (ILSAEKEAEYEEKEAARQLQEELR) form a coiled coil. A B30.2/SPRY domain is found at 295-488 (AARQLQEELR…LFICPAFTGA (194 aa)).

Belongs to the immunoglobulin superfamily. BTN/MOG family. Post-translationally, N-glycosylated. Widely expressed (at protein level). In the thymus, restricted to the corticomedullary junction, but not confined solely to epithelial cells (at protein level). Significant expression on naive B-cells, splenic natural killer cells, dendritic cells and peritoneal macrophages (at protein level). Negligible expression on naive T-cells up-regulated on activated T-cells (at protein level).

The protein resides in the membrane. Its function is as follows. Inhibits the proliferation of CD4 and CD8 T-cells activated by anti-CD3 antibodies, T-cell metabolism and IL2 and IFNG secretion. The protein is Butyrophilin subfamily 2 member A2 (Btn2a2) of Mus musculus (Mouse).